The primary structure comprises 488 residues: 3-octaprenyl-4-hydroxybenzoate carboxy-lyase (488 aa).

Mn(2+) is bound at residue N172. Residues 175 to 177, 189 to 191, and 194 to 195 each bind prenylated FMN; these read IYR, RWL, and RG. E238 is a Mn(2+) binding site. D287 functions as the Proton donor in the catalytic mechanism.

It belongs to the UbiD family. As to quaternary structure, homohexamer. Prenylated FMN is required as a cofactor. It depends on Mn(2+) as a cofactor.

It is found in the cell membrane. It carries out the reaction a 4-hydroxy-3-(all-trans-polyprenyl)benzoate + H(+) = a 2-(all-trans-polyprenyl)phenol + CO2. Its pathway is cofactor biosynthesis; ubiquinone biosynthesis. Its function is as follows. Catalyzes the decarboxylation of 3-octaprenyl-4-hydroxy benzoate to 2-octaprenylphenol, an intermediate step in ubiquinone biosynthesis. This Pseudomonas fluorescens (strain ATCC BAA-477 / NRRL B-23932 / Pf-5) protein is 3-octaprenyl-4-hydroxybenzoate carboxy-lyase.